The sequence spans 217 residues: ATP synthase F(0) complex subunit a (217 aa).

The next 6 membrane-spanning stretches (helical) occupy residues 20–40 (MNWI…WILP), 70–90 (PAFL…FSLF), 100–120 (MVFS…LSTC), 126–146 (MIAH…MTII), 166–188 (LIAG…IIFI), and 193–215 (MIFE…SLYS).

It belongs to the ATPase A chain family. In terms of assembly, component of the ATP synthase complex composed at least of ATP5F1A/subunit alpha, ATP5F1B/subunit beta, ATP5MC1/subunit c (homooctomer), MT-ATP6/subunit a, MT-ATP8/subunit 8, ATP5ME/subunit e, ATP5MF/subunit f, ATP5MG/subunit g, ATP5MK/subunit k, ATP5MJ/subunit j, ATP5F1C/subunit gamma, ATP5F1D/subunit delta, ATP5F1E/subunit epsilon, ATP5PF/subunit F6, ATP5PB/subunit b, ATP5PD/subunit d, ATP5PO/subunit OSCP. ATP synthase complex consists of a soluble F(1) head domain (subunits alpha(3) and beta(3)) - the catalytic core - and a membrane F(0) domain - the membrane proton channel (subunits c, a, 8, e, f, g, k and j). These two domains are linked by a central stalk (subunits gamma, delta, and epsilon) rotating inside the F1 region and a stationary peripheral stalk (subunits F6, b, d, and OSCP). Interacts with DNAJC30; interaction is direct.

The protein resides in the mitochondrion inner membrane. It catalyses the reaction H(+)(in) = H(+)(out). Functionally, subunit a, of the mitochondrial membrane ATP synthase complex (F(1)F(0) ATP synthase or Complex V) that produces ATP from ADP in the presence of a proton gradient across the membrane which is generated by electron transport complexes of the respiratory chain. ATP synthase complex consist of a soluble F(1) head domain - the catalytic core - and a membrane F(1) domain - the membrane proton channel. These two domains are linked by a central stalk rotating inside the F(1) region and a stationary peripheral stalk. During catalysis, ATP synthesis in the catalytic domain of F(1) is coupled via a rotary mechanism of the central stalk subunits to proton translocation. With the subunit c (ATP5MC1), forms the proton-conducting channel in the F(0) domain, that contains two crucial half-channels (inlet and outlet) that facilitate proton movement from the mitochondrial intermembrane space (IMS) into the matrix. Protons are taken up via the inlet half-channel and released through the outlet half-channel, following a Grotthuss mechanism. The protein is ATP synthase F(0) complex subunit a of Rhopalosiphum padi (Bird cherry-oat aphid).